The sequence spans 94 residues: Pyrimidine/purine nucleoside phosphorylase (94 aa).

This sequence belongs to the nucleoside phosphorylase PpnP family.

It carries out the reaction a purine D-ribonucleoside + phosphate = a purine nucleobase + alpha-D-ribose 1-phosphate. It catalyses the reaction adenosine + phosphate = alpha-D-ribose 1-phosphate + adenine. The catalysed reaction is cytidine + phosphate = cytosine + alpha-D-ribose 1-phosphate. The enzyme catalyses guanosine + phosphate = alpha-D-ribose 1-phosphate + guanine. It carries out the reaction inosine + phosphate = alpha-D-ribose 1-phosphate + hypoxanthine. It catalyses the reaction thymidine + phosphate = 2-deoxy-alpha-D-ribose 1-phosphate + thymine. The catalysed reaction is uridine + phosphate = alpha-D-ribose 1-phosphate + uracil. The enzyme catalyses xanthosine + phosphate = alpha-D-ribose 1-phosphate + xanthine. In terms of biological role, catalyzes the phosphorolysis of diverse nucleosides, yielding D-ribose 1-phosphate and the respective free bases. Can use uridine, adenosine, guanosine, cytidine, thymidine, inosine and xanthosine as substrates. Also catalyzes the reverse reactions. The sequence is that of Pyrimidine/purine nucleoside phosphorylase from Escherichia coli (strain ATCC 8739 / DSM 1576 / NBRC 3972 / NCIMB 8545 / WDCM 00012 / Crooks).